We begin with the raw amino-acid sequence, 470 residues long: MTPFMTEDFLLDTEFARRLYHDYAKDQPIFDYHCHLPPQQIAEDYRFKNLYDIWLKGDHYKWRAMRTNGVAERLCTGDASDREKFDAWAATVPHTIGNPLYHWTHLELRRPFGITGKLLSPSTADEIWNECNELLAQDNFSARGIMQQMNVKMVGTTDDPIDSLEHHAEIAKDGSFTIKVLPSWRPDKAFNIEQATFNDYMAKLGEVSDTDIRRFADLQTALTKRLDHFAAHGCKVSDHALDVVMFAEANEAELDRILARRLAGETLSEHEVAQFKTAVLVFLGAEYARRGWVQQYHIGALRNNNLRQFKLLGPDVGFDSINDRPMAEELSKLLSKQNEENLLPKTILYCLNPRDNEVLGTMIGNFQGEGMPGKMQFGSGWWFNDQKDGMERQMTQLAQLGLLSRFVGMLTDSRSFLSYTRHEYFRRILCQMIGRWVEAGEAPADINLLGEMVKNICFNNARDYFAIELN.

It belongs to the metallo-dependent hydrolases superfamily. Uronate isomerase family.

The catalysed reaction is D-glucuronate = D-fructuronate. It catalyses the reaction aldehydo-D-galacturonate = keto-D-tagaturonate. It functions in the pathway carbohydrate metabolism; pentose and glucuronate interconversion. The polypeptide is Uronate isomerase (Escherichia coli O17:K52:H18 (strain UMN026 / ExPEC)).